The following is a 373-amino-acid chain: P2Y purinoceptor 2 (373 aa).

The Extracellular segment spans residues 1–32; sequence MAADLEPWNSTINGTWEGDELGYKCRFNEDFK. N9 and N13 each carry an N-linked (GlcNAc...) asparagine glycan. A helical transmembrane segment spans residues 33–59; sequence YVLLPVSYGVVCVLGLCLNVVALYIFL. Residues 60-70 lie on the Cytoplasmic side of the membrane; it reads CRLKTWNASTT. A helical membrane pass occupies residues 71-93; the sequence is YMFHLAVSDSLYAASLPLLVYYY. The Extracellular portion of the chain corresponds to 94-110; sequence ARGDHWPFSTVLCKLVR. An intrachain disulfide couples C106 to C183. A helical transmembrane segment spans residues 111 to 129; the sequence is FLFYTNLYCSILFLTCISV. Topologically, residues 130-152 are cytoplasmic; the sequence is HRCLGVLRPLHSLRWGRARYARR. The helical transmembrane segment at 153-172 threads the bilayer; the sequence is VAAVVWVLVLACQAPVLYFV. Residues 173-194 lie on the Extracellular side of the membrane; sequence TTSVRGTRITCHDTSARELFSH. Residues 195 to 220 traverse the membrane as a helical segment; sequence FVAYSSVMLGLLFAVPFSVILVCYVL. The Cytoplasmic portion of the chain corresponds to 221 to 246; the sequence is MARRLLKPAYGTTGGLPRAKRKSVRT. Residues 247–269 traverse the membrane as a helical segment; sequence IALVLAVFALCFLPFHVTRTLYY. Residues 270 to 287 are Extracellular-facing; the sequence is SFRSLDLSCHTLNAINMA. A helical transmembrane segment spans residues 288 to 309; that stretch reads YKITRPLASANSCLDPVLYFLA. The Cytoplasmic portion of the chain corresponds to 310 to 373; that stretch reads GQRLVRFARD…AGSETKDIRL (64 aa). The tract at residues 318-373 is disordered; it reads RDAKPPTEPTPSPQARRKLGLHRPNRTVRKDLSVSSDDSRRTESTPAGSETKDIRL. A compositionally biased stretch (basic residues) spans 332-344; the sequence is ARRKLGLHRPNRT. Residues 345–360 show a composition bias toward basic and acidic residues; that stretch reads VRKDLSVSSDDSRRTE.

This sequence belongs to the G-protein coupled receptor 1 family. Spleen, testis, kidney, liver, lung, heart and brain.

Its subcellular location is the cell membrane. In terms of biological role, receptor for ATP and UTP coupled to G-proteins that activate a phosphatidylinositol-calcium second messenger system. The affinity range is UTP = ATP &gt; ATP-gamma-S &gt;&gt; 2-methylthio-ATP = ADP. This chain is P2Y purinoceptor 2 (P2ry2), found in Mus musculus (Mouse).